We begin with the raw amino-acid sequence, 1729 residues long: 182 kDa tankyrase-1-binding protein (1729 aa).

The segment covering 1–12 has biased composition (polar residues); the sequence is MKVSTLRESSAM. The segment at 1 to 151 is disordered; sequence MKVSTLRESS…VRKAPAPFRP (151 aa). Serine 14 is modified (phosphoserine). Residues 46-63 are compositionally biased toward low complexity; the sequence is ALPAKPALPAKPSLLVPV. The span at 117–127 shows a compositional bias: basic and acidic residues; sequence TGKEEAGKEEP. Threonine 131 is subject to Phosphothreonine. Phosphoserine is present on residues serine 178, serine 221, and serine 228. Disordered stretches follow at residues 184–450, 484–603, and 657–880; these read GSRL…LAAL, PSGL…ESPL, and ETTQ…SSRD. Positions 210-1572 are acidic; that stretch reads DEDGSTLFRG…TEILDSAMYR (1363 aa). Residues 230–245 show a composition bias toward basic and acidic residues; the sequence is AECREEHSKTPEERSL. The residue at position 239 (threonine 239) is a Phosphothreonine. 2 positions are modified to phosphoserine: serine 287 and serine 301. Over residues 352-363 the composition is skewed to low complexity; it reads PSPGLPAEGAPE. Positions 364 to 374 are enriched in pro residues; that stretch reads APRPSSPPPEV. Phosphoserine is present on residues serine 429, serine 435, serine 437, serine 494, and serine 498. Composition is skewed to low complexity over residues 500-512, 524-541, and 572-583; these read ITEASEAAEAAEA, VSQQGQGAGSAPSGSGSS, and LPTTEGTPGLPL. At threonine 501 the chain carries Phosphothreonine. Residues serine 601, serine 672, serine 691, serine 695, serine 712, serine 724, serine 744, serine 762, and serine 806 each carry the phosphoserine modification. Residues 738 to 753 show a composition bias toward polar residues; that stretch reads PQPSSFSPSSWCQGAS. Residues 803-812 are compositionally biased toward polar residues; sequence ASSSQDQSKV. At threonine 833 the chain carries Phosphothreonine. 6 positions are modified to phosphoserine: serine 836, serine 851, serine 872, serine 877, serine 882, and serine 893. A compositionally biased stretch (basic and acidic residues) spans 858–872; sequence RDAELQDQEFGKRDS. A Phosphotyrosine modification is found at tyrosine 897. Residues 897-1083 form a disordered region; it reads YASQDANEQG…ADLEDGEMGK (187 aa). A phosphoserine mark is found at serine 899, serine 920, serine 936, and serine 976. Threonine 979 is modified (phosphothreonine). A phosphoserine mark is found at serine 983, serine 987, serine 1004, serine 1008, serine 1013, serine 1024, serine 1029, serine 1054, serine 1073, serine 1091, serine 1103, serine 1133, serine 1138, serine 1158, serine 1178, serine 1248, and serine 1253. The span at 1012-1021 shows a compositional bias: basic and acidic residues; sequence GSRDAGRPGE. The span at 1043–1054 shows a compositional bias: polar residues; it reads RDQSSWQNSDAS. A disordered region spans residues 1240–1302; the sequence is EVGEGGGHSQ…GAVCSPGESK (63 aa). Threonine 1282 carries the post-translational modification Phosphothreonine. Phosphoserine is present on residues serine 1297, serine 1328, serine 1331, serine 1383, and serine 1385. Residues 1362 to 1561 form a disordered region; the sequence is AREHGVGGVS…SPSQDFSFIE (200 aa). Residues 1389–1400 show a composition bias toward basic and acidic residues; it reads EARDPLEARELG. Polar residues predominate over residues 1406-1419; that stretch reads GPETQGEDYSSSSL. Residues serine 1435, serine 1439, serine 1450, serine 1452, serine 1473, serine 1476, serine 1503, and serine 1506 each carry the phosphoserine modification. A tankyrase-binding region spans residues 1450 to 1542; sequence SGSQGLLEEM…SDQGPAQTSR (93 aa). Residue threonine 1518 is modified to Phosphothreonine. Residues serine 1533, serine 1545, and serine 1558 each carry the phosphoserine modification. The residue at position 1563 (threonine 1563) is a Phosphothreonine. Positions 1575–1729 are disordered; sequence ANLGRKRGHR…QALKLKKKKV (155 aa). A compositionally biased stretch (basic residues) spans 1577–1586; sequence LGRKRGHRAP. Over residues 1602–1615 the composition is skewed to basic and acidic residues; sequence SDAHLFQDSTEPRA. Serine 1620, serine 1621, and serine 1631 each carry phosphoserine. Positions 1629–1635 match the Nuclear localization signal motif; that stretch reads PQSRRTR. At lysine 1644 the chain carries N6-methyllysine. 3 positions are modified to phosphoserine: serine 1652, serine 1666, and serine 1715. Positions 1665–1679 are enriched in basic and acidic residues; sequence RSAEEGELAESKSSQ. Positions 1723 to 1729 match the Nuclear localization signal motif; sequence KLKKKKV.

As to quaternary structure, binds to the ANK repeat domain of TNKS1 and TNKS2. ADP-ribosylated by TNKS1 (in vitro). In terms of tissue distribution, detected in testis, ovary, lung, skeletal muscle, heart, prostate and pancreas, and at very low levels in brain and peripheral blood leukocytes.

It localises to the nucleus. Its subcellular location is the cytoplasm. The protein localises to the cytoskeleton. The protein resides in the chromosome. The chain is 182 kDa tankyrase-1-binding protein (TNKS1BP1) from Homo sapiens (Human).